The chain runs to 504 residues: AMP phosphorylase (504 aa).

AMP is bound by residues G169, 195–200 (SRAITS), and T204. D257 serves as the catalytic Proton donor. Positions 265 and 289 each coordinate AMP.

This sequence belongs to the thymidine/pyrimidine-nucleoside phosphorylase family. Type 2 subfamily.

It catalyses the reaction AMP + phosphate = alpha-D-ribose 1,5-bisphosphate + adenine. The catalysed reaction is CMP + phosphate = cytosine + alpha-D-ribose 1,5-bisphosphate. It carries out the reaction UMP + phosphate = alpha-D-ribose 1,5-bisphosphate + uracil. Its function is as follows. Catalyzes the conversion of AMP and phosphate to adenine and ribose 1,5-bisphosphate (R15P). Exhibits phosphorylase activity toward CMP and UMP in addition to AMP. Functions in an archaeal AMP degradation pathway, together with R15P isomerase and RubisCO. This is AMP phosphorylase from Methanococcus aeolicus (strain ATCC BAA-1280 / DSM 17508 / OCM 812 / Nankai-3).